A 1063-amino-acid polypeptide reads, in one-letter code: Unconventional myosin-Ic (1063 aa).

Position 1 is an N-acetylmethionine (M1). Residue T10 is modified to Phosphoserine. The region spanning 47–731 (GVQDFVLLEN…TLFATEDSLE (685 aa)) is the Myosin motor domain. ATP-binding positions include N88, Y96, 139-148 (SGESGAGKTE), and 192-196 (NDNSS). K383 carries the post-translational modification N6-methyllysine. Phosphoserine is present on S408. K486 is subject to N6-acetyllysine. A Phosphoserine modification is found at S536. Residues 608–630 (LLQLVEILRSKEPAYIRCIKPND) are actin-binding. IQ domains lie at 734-757 (RQSL…FLRV) and 758-786 (KRSA…AAQT). A phosphoserine mark is found at S864 and S1041. A TH1 domain is found at 885–1059 (KDNYPQSVPR…NGHLAVVAPR (175 aa)).

This sequence belongs to the TRAFAC class myosin-kinesin ATPase superfamily. Myosin family. In terms of assembly, interacts (via its IQ motifs) with CABP1 and CIB1; the interaction with CABP1 and CIB1 is calcium-dependent. Interacts (via tail domain) with PLEKHB1 (via PH domain); the interaction is not affected by the presence or absence of calcium and CALM. Interacts with POLR1A. Interacts with POLR2A. Component of the B-WICH complex, at least composed of SMARCA5/SNF2H, BAZ1B/WSTF, SF3B1, DEK, MYO1C, ERCC6, MYBBP1A and DDX21. Interacts (via its IQ motifs) with CALM; this precludes interaction with YWHAB. Interacts with YWHAB; this precludes interaction with CALM. Interacts with RPS6. Interacts with actin. Interacts with LLPH. Interacts with GLUT4. Interacts (via its IQ motifs) with SH3BGRL3; the interaction is dependent on calcium and takes place at membrane ruffles. Isoform 2 contains a N-acetylmethionine at position 1. In terms of tissue distribution, isoform 3 is expressed in small intestine, pancreas, brain, kidney, skin, heart muscle, testis, striated muscle, spleen, liver and lung (at protein level). Expressed in brain, testis, adrenal glands, thymus, spleen, kidney, lung, heart, cochlea and vestibule. Expressed in sensory hair cells of the inner ear. Expressed in adipocytes.

It is found in the cytoplasm. Its subcellular location is the nucleus. It localises to the cell cortex. The protein localises to the cell projection. The protein resides in the stereocilium membrane. It is found in the cytoplasmic vesicle. Its subcellular location is the ruffle membrane. It localises to the nucleolus. The protein localises to the nucleoplasm. Its function is as follows. Myosins are actin-based motor molecules with ATPase activity. Unconventional myosins serve in intracellular movements. Their highly divergent tails bind to membranous compartments, which then are moved relative to actin filaments. Involved in glucose transporter recycling in response to insulin by regulating movement of intracellular GLUT4-containing vesicles to the plasma membrane. Component of the hair cell's (the sensory cells of the inner ear) adaptation-motor complex. Acts as a mediator of adaptation of mechanoelectrical transduction in stereocilia of vestibular hair cells. Binds phosphoinositides and links the actin cytoskeleton to cellular membranes. Involved in regulation of transcription. Associated with transcriptional active ribosomal genes. Appears to cooperate with the WICH chromatin-remodeling complex to facilitate transcription. Necessary for the formation of the first phosphodiester bond during transcription initiation. The chain is Unconventional myosin-Ic (Myo1c) from Mus musculus (Mouse).